The primary structure comprises 82 residues: 4-(gamma-L-glutamylamino)butanoyl-[BtrI acyl-carrier protein] monooxygenase BtrO (82 aa).

In terms of assembly, homotetramer.

The enzyme catalyses 4-(gamma-L-glutamylamino)butanoyl-[BtrI ACP] + FMNH2 + O2 = 4-(gamma-L-glutamylamino)-(2S)-2-hydroxybutanoyl-[BtrI ACP] + FMN + H2O + H(+). It participates in antibiotic biosynthesis; butirosin biosynthesis. Functionally, NAD(P)H:FMN oxidoreductase component of a two-component system involved in the biosynthesis of the side chain of the aminoglycoside antibiotics in the biosynthetic pathway of butirosin. Together with BtrO, mediates hydroxylation of gamma-L-Glu-GABA-S-BtrI. This chain is 4-(gamma-L-glutamylamino)butanoyl-[BtrI acyl-carrier protein] monooxygenase BtrO (btrV), found in Niallia circulans (Bacillus circulans).